The following is a 358-amino-acid chain: DnaJ homolog subfamily B member 11 (358 aa).

A signal peptide spans 1 to 22 (MAPQNLGTFCLLLLYLIGTVIA). Positions 25–90 (DFYKILGVPR…EKRKQYDTYG (66 aa)) constitute a J domain. Phosphothreonine is present on Thr188. A glycan (N-linked (GlcNAc...) asparagine) is linked at Asn261.

In terms of assembly, part of a large chaperone multiprotein complex comprising DNAJB11, HSP90B1, HSPA5, HYOU, PDIA2, PDIA4, PDIA6, PPIB, SDF2L1, UGGT1 and very small amounts of ERP29, but not, or at very low levels, CALR nor CANX. Binds to denatured substrates in an ATP-independent manner. Interacts via the J domain with HSPA5 in an ATP-dependent manner. Contains high-mannose Endo H-sensitive carbohydrates. In terms of processing, cys-169, Cys-171, Cys-193 and Cys-196 form intramolecular disulfide bonds. The preferential partner for each Cys is not known.

Its subcellular location is the endoplasmic reticulum lumen. In terms of biological role, as a co-chaperone for HSPA5 it is required for proper folding, trafficking or degradation of proteins. Binds directly to both unfolded proteins that are substrates for ERAD and nascent unfolded peptide chains, but dissociates from the HSPA5-unfolded protein complex before folding is completed. May help recruiting HSPA5 and other chaperones to the substrate. Stimulates HSPA5 ATPase activity. It is necessary for maturation and correct trafficking of PKD1. The polypeptide is DnaJ homolog subfamily B member 11 (DNAJB11) (Bos taurus (Bovine)).